The sequence spans 399 residues: DJ-1 protein homolog F (399 aa).

PfpI endopeptidase domains lie at 7-199 (KSVL…ESLG) and 211-394 (TSLL…TALG).

The protein belongs to the peptidase C56 family. Homotrimer.

May be involved in oxidative stress response. This is DJ-1 protein homolog F (DJ1F) from Arabidopsis thaliana (Mouse-ear cress).